A 351-amino-acid chain; its full sequence is uncharacterized protein (351 aa).

Histidine 23, histidine 25, lysine 151, histidine 184, histidine 212, and aspartate 270 together coordinate Zn(2+). Lysine 151 is modified (N6-carboxylysine).

This sequence belongs to the metallo-dependent hydrolases superfamily. Phosphotriesterase family. It depends on Zn(2+) as a cofactor.

This is an uncharacterized protein from Mycoplasma pneumoniae (strain ATCC 29342 / M129 / Subtype 1) (Mycoplasmoides pneumoniae).